The chain runs to 832 residues: FAST kinase domain-containing protein 1, mitochondrial (832 aa).

Residues 765–825 (VAIEFLDSKA…KDAWMDYLRK (61 aa)) form the RAP domain.

Belongs to the FAST kinase family.

It localises to the mitochondrion. Its function is as follows. May regulate the stability of some mitochondrial mRNA species. The chain is FAST kinase domain-containing protein 1, mitochondrial (fastkd1) from Xenopus laevis (African clawed frog).